We begin with the raw amino-acid sequence, 414 residues long: TAR DNA-binding protein 43 (414 aa).

Glycyl lysine isopeptide (Lys-Gly) (interchain with G-Cter in SUMO2) cross-links involve residues lysine 79, lysine 84, lysine 95, lysine 102, and lysine 181. RRM domains lie at 104-200 and 191-262; these read SDLI…RCTE and RKVF…NAEP. Serine 183 is subject to Phosphoserine. The interval 216 to 414 is interaction with UBQLN2; the sequence is DVMDVFIPKP…MDSKSSGWGM (199 aa). Positions 261–274 are enriched in basic and acidic residues; that stretch reads EPKHNSNRQLERSG. Disordered regions lie at residues 261–303 and 341–373; these read EPKH…GNNQ and ASQQ…GNNS. Lysine 263 is covalently cross-linked (Glycyl lysine isopeptide (Lys-Gly) (interchain with G-Cter in SUMO2)). Residues 275–303 show a composition bias toward gly residues; that stretch reads RFGGNPGGFGNQGGFGNSRGGGAGLGNNQ. The residue at position 292 (serine 292) is a Phosphoserine. Position 293 is an omega-N-methylarginine (arginine 293). Residues 342-358 are compositionally biased toward low complexity; sequence SQQNQSGPSGNNQNQGN.

As to quaternary structure, monomer and component of the SFPQ-NONO complex, which is probably a heterotetramer of two 52 kDa (NONO) and two 100 kDa (SFPQ) subunits. NONO is a component of spliceosome and U5.4/6 snRNP complexes. Interacts with CPNE4 (via VWFA domain). Forms heterodimers with PSPC1; this involves formation of a coiled coil domain by helices from both proteins. Part of complex consisting of SFPQ, NONO and MATR3. Part of a complex consisting of SFPQ, NONO and NR5A1. Part of a complex consisting of SFPQ, NONO and TOP1. Interacts with SPI1. Interacts with RNF43. Interacts with PER1 and PER2. Part of the HDP-RNP complex composed of at least HEXIM1, PRKDC, XRCC5, XRCC6, paraspeckle proteins (SFPQ, NONO, PSPC1, RBM14, and MATR3) and NEAT1 RNA. Interacts (via second RRM domain) with WASL; the interaction is direct. Component of a multiprotein complex with WASL and SFPQ. Interacts with ERCC6. Interacts (via DNA-binding domain) with TET1. In terms of processing, hyperphosphorylated. Ubiquitinated.

The protein resides in the nucleus. Its subcellular location is the nucleolus. The protein localises to the nucleus speckle. It localises to the chromosome. It is found in the mitochondrion. In terms of biological role, DNA- and RNA binding protein, involved in several nuclear processes. Binds the conventional octamer sequence in double-stranded DNA. Also binds single-stranded DNA and RNA at a site independent of the duplex site. Involved in pre-mRNA splicing, probably as a heterodimer with SFPQ. Interacts with U5 snRNA, probably by binding to a purine-rich sequence located on the 3' side of U5 snRNA stem 1b. Together with PSPC1, required for the formation of nuclear paraspeckles. The SFPQ-NONO heteromer associated with MATR3 may play a role in nuclear retention of defective RNAs. The SFPQ-NONO heteromer may be involved in DNA unwinding by modulating the function of topoisomerase I/TOP1. The SFPQ-NONO heteromer may be involved in DNA non-homologous end joining (NHEJ) required for double-strand break repair and V(D)J recombination and may stabilize paired DNA ends. In vitro, the complex strongly stimulates DNA end joining, binds directly to the DNA substrates and cooperates with the Ku70/G22P1-Ku80/XRCC5 (Ku) dimer to establish a functional preligation complex. NONO is involved in transcriptional regulation. The SFPQ-NONO-NR5A1 complex binds to the CYP17 promoter and regulates basal and cAMP-dependent transcriptional activity. NONO binds to an enhancer element in long terminal repeats of endogenous intracisternal A particles (IAPs) and activates transcription. Regulates the circadian clock by repressing the transcriptional activator activity of the CLOCK-BMAL1 heterodimer. Important for the functional organization of GABAergic synapses. Plays a specific and important role in the regulation of synaptic RNAs and GPHN/gephyrin scaffold structure, through the regulation of GABRA2 transcript. Plays a key role during neuronal differentiation by recruiting TET1 to genomic loci and thereby regulating 5-hydroxymethylcytosine levels. Plays a role in the regulation of DNA virus-mediated innate immune response by assembling into the HDP-RNP complex, a complex that serves as a platform for IRF3 phosphorylation and subsequent innate immune response activation through the cGAS-STING pathway. The protein is TAR DNA-binding protein 43 (TARDBP) of Pongo abelii (Sumatran orangutan).